A 294-amino-acid chain; its full sequence is GTP cyclohydrolase FolE2 (294 aa).

The protein belongs to the GTP cyclohydrolase IV family.

It catalyses the reaction GTP + H2O = 7,8-dihydroneopterin 3'-triphosphate + formate + H(+). It participates in cofactor biosynthesis; 7,8-dihydroneopterin triphosphate biosynthesis; 7,8-dihydroneopterin triphosphate from GTP: step 1/1. Converts GTP to 7,8-dihydroneopterin triphosphate. This Acinetobacter baylyi (strain ATCC 33305 / BD413 / ADP1) protein is GTP cyclohydrolase FolE2.